The sequence spans 715 residues: Epidermal growth factor receptor kinase substrate 8-like protein 2 (715 aa).

A PID domain is found at 46-202; the sequence is MHETSQYHVQ…RQRQSILPPP (157 aa). Positions 183–243 are disordered; sequence QTLKGHQEKI…GFRRRESQEE (61 aa). Pro residues predominate over residues 199–208; sequence LPPPQGPAPI. Basic and acidic residues-rich tracts occupy residues 213–222 and 234–243; these read RGGDSPEAKN and GFRRRESQEE. At S240 the chain carries Phosphoserine. T303 carries the post-translational modification Phosphothreonine. A disordered region spans residues 448-487; the sequence is VSPVSRQSIRNSQKHSPTSEPTPPGDALPPVSSPHTHRGY. S449 carries the post-translational modification Phosphoserine. A compositionally biased stretch (polar residues) spans 451-466; that stretch reads VSRQSIRNSQKHSPTS. T469 is modified (phosphothreonine). One can recognise an SH3 domain in the interval 492-551; sequence AMAKYVKILYDFTARNANELSVLKDEVLEVLEDGRQWWKLRSRSGQAGYVPCNILGEARP. Position 570 is a phosphoserine (S570).

It belongs to the EPS8 family. As to quaternary structure, interacts with ABI1. Part of a complex that contains SOS1, ABI1 and EPS8L2. Associates with F-actin. As to expression, detected in fibroblasts and placenta.

The protein localises to the cytoplasm. Its subcellular location is the cell projection. It localises to the stereocilium. In terms of biological role, stimulates guanine exchange activity of SOS1. May play a role in membrane ruffling and remodeling of the actin cytoskeleton. In the cochlea, is required for stereocilia maintenance in adult hair cells. In Homo sapiens (Human), this protein is Epidermal growth factor receptor kinase substrate 8-like protein 2 (EPS8L2).